The chain runs to 1196 residues: Nucleolar protein 6 (1196 aa).

Disordered regions lie at residues 1–75 (MPGK…VKPP) and 1140–1196 (KREQ…KALK). Residues 22–31 (HAEDHSDLEH) are compositionally biased toward basic and acidic residues. Residues 1165–1174 (KPKKHRKRKG) are compositionally biased toward basic residues.

Belongs to the NRAP family. In terms of assembly, part of the small subunit (SSU) processome, composed of more than 70 proteins and the RNA chaperone small nucleolar RNA (snoRNA) U3.

The protein resides in the nucleus. The protein localises to the nucleolus. It localises to the chromosome. In terms of biological role, part of the small subunit (SSU) processome, first precursor of the small eukaryotic ribosomal subunit. During the assembly of the SSU processome in the nucleolus, many ribosome biogenesis factors, an RNA chaperone and ribosomal proteins associate with the nascent pre-rRNA and work in concert to generate RNA folding, modifications, rearrangements and cleavage as well as targeted degradation of pre-ribosomal RNA by the RNA exosome. The polypeptide is Nucleolar protein 6 (Drosophila sechellia (Fruit fly)).